The following is a 601-amino-acid chain: ATP-dependent rRNA helicase SPB4 (601 aa).

The Q motif motif lies at 14 to 42; sequence LAWSQASLQPWIHDAIDSLGFRSMTPVQA. One can recognise a Helicase ATP-binding domain in the interval 45 to 228; sequence IPLFCGNKDV…RTGMSNPVKI (184 aa). An ATP-binding site is contributed by 58–65; that stretch reads AVTGSGKT. The DEAD box signature appears at 176–179; sequence DEAD. The 163-residue stretch at 257–419 folds into the Helicase C-terminal domain; sequence VLINMLSTLQ…AYKAFSKNLR (163 aa). The stretch at 507 to 575 forms a coiled coil; the sequence is KEKIRLETME…QIMNESSDEE (69 aa). Over residues 532–554 the composition is skewed to basic and acidic residues; that stretch reads LKVKNEAWSSKNEKKEGKQERRE. Residues 532–576 are disordered; it reads LKVKNEAWSSKNEKKEGKQERREKMKRKREAIEKQIMNESSDEET.

This sequence belongs to the DEAD box helicase family. DDX55/SPB4 subfamily. In terms of assembly, component of pre-60S ribosomal complexes.

The protein resides in the nucleus. It is found in the nucleolus. The catalysed reaction is ATP + H2O = ADP + phosphate + H(+). Its function is as follows. ATP-binding RNA helicase involved in the biogenesis of 60S ribosomal subunits. Binds 90S pre-ribosomal particles and dissociates from pre-60S ribosomal particles after processing of 27SB pre-rRNA. Required for the normal formation of 18S rRNA through the processing of pre-rRNAs at sites A0, A1 and A2, and the normal formation of 25S and 5.8S rRNAs through the processing of pre-rRNAs at sites C1 and C2. The protein is ATP-dependent rRNA helicase SPB4 of Meyerozyma guilliermondii (strain ATCC 6260 / CBS 566 / DSM 6381 / JCM 1539 / NBRC 10279 / NRRL Y-324) (Yeast).